We begin with the raw amino-acid sequence, 72 residues long: MAVMISHFSWKPLFPKEKLPGWKISFYYKGTHYEGIYHKSGEIEWGDLFPARADEPALTNEIHELMLFHIYD.

This is an uncharacterized protein from Bacillus subtilis (strain 168).